The primary structure comprises 60 residues: Large ribosomal subunit protein uL30 (60 aa).

The protein belongs to the universal ribosomal protein uL30 family. Part of the 50S ribosomal subunit.

The chain is Large ribosomal subunit protein uL30 from Lysinibacillus sphaericus (strain C3-41).